The primary structure comprises 399 residues: Elongation factor Tu (399 aa).

Positions 10-209 (KPHVNIGTIG…AVDDYIPTPV (200 aa)) constitute a tr-type G domain. The G1 stretch occupies residues 19-26 (GHVDHGKT). 19-26 (GHVDHGKT) lines the GTP pocket. Position 26 (threonine 26) interacts with Mg(2+). The interval 62 to 66 (GITIN) is G2. Positions 83–86 (DCPG) are G3. GTP contacts are provided by residues 83–87 (DCPGH) and 138–141 (NKCD). Residues 138–141 (NKCD) are G4. The tract at residues 175–177 (SAY) is G5.

The protein belongs to the TRAFAC class translation factor GTPase superfamily. Classic translation factor GTPase family. EF-Tu/EF-1A subfamily. In terms of assembly, monomer.

The protein resides in the cytoplasm. The enzyme catalyses GTP + H2O = GDP + phosphate + H(+). Its function is as follows. GTP hydrolase that promotes the GTP-dependent binding of aminoacyl-tRNA to the A-site of ribosomes during protein biosynthesis. The sequence is that of Elongation factor Tu from Bifidobacterium longum subsp. infantis (strain ATCC 15697 / DSM 20088 / JCM 1222 / NCTC 11817 / S12).